Consider the following 445-residue polypeptide: 23S rRNA (uracil(1939)-C(5))-methyltransferase RlmD (445 aa).

The interval 1–21 is disordered; sequence MARRRKQLPETPEPASIETLS. The TRAM domain occupies 5–64; it reads RKQLPETPEPASIETLSHDGRGIARRDGKTTFIDNALPGEEVMFKFTYMRRKFDEGKAVE. Positions 77, 83, 86, and 165 each coordinate [4Fe-4S] cluster. S-adenosyl-L-methionine-binding residues include Gln-275, Phe-304, Asn-309, Glu-325, Asp-352, and Asp-373. Cys-399 serves as the catalytic Nucleophile.

This sequence belongs to the class I-like SAM-binding methyltransferase superfamily. RNA M5U methyltransferase family. RlmD subfamily.

The catalysed reaction is uridine(1939) in 23S rRNA + S-adenosyl-L-methionine = 5-methyluridine(1939) in 23S rRNA + S-adenosyl-L-homocysteine + H(+). Catalyzes the formation of 5-methyl-uridine at position 1939 (m5U1939) in 23S rRNA. The chain is 23S rRNA (uracil(1939)-C(5))-methyltransferase RlmD from Alcanivorax borkumensis (strain ATCC 700651 / DSM 11573 / NCIMB 13689 / SK2).